Reading from the N-terminus, the 106-residue chain is Protein yippee-like At4g27745 (106 aa).

Residues 8-105 (RLYSCCNCRN…FEKAKIVKED (98 aa)) enclose the Yippee domain. 4 residues coordinate Zn(2+): cysteine 12, cysteine 15, cysteine 68, and cysteine 71.

Belongs to the yippee family.

The sequence is that of Protein yippee-like At4g27745 from Arabidopsis thaliana (Mouse-ear cress).